The primary structure comprises 139 residues: Putative pre-16S rRNA nuclease (139 aa).

Belongs to the YqgF nuclease family.

It localises to the cytoplasm. Could be a nuclease involved in processing of the 5'-end of pre-16S rRNA. The polypeptide is Putative pre-16S rRNA nuclease (Rippkaea orientalis (strain PCC 8801 / RF-1) (Cyanothece sp. (strain PCC 8801))).